A 229-amino-acid chain; its full sequence is Cytochrome c oxidase subunit 2 (229 aa).

Topologically, residues 1–26 (MANWTQLGLQDASSPLMEELIYFHDY) are mitochondrial intermembrane. Residues 27–48 (TLIILTLITILVFYGLASLIVS) traverse the membrane as a helical segment. Residues 49 to 62 (SNTNRFFLEGQSLE) lie on the Mitochondrial matrix side of the membrane. Residues 63–82 (TIWTVIPAVILIFIALPSLQ) form a helical membrane-spanning segment. The Mitochondrial intermembrane portion of the chain corresponds to 83–229 (LLYLIDEVNN…ENWVSNFLNE (147 aa)). Residues His-161, Cys-196, Glu-198, Cys-200, His-204, and Met-207 each coordinate Cu cation. Residue Glu-198 coordinates Mg(2+).

The protein belongs to the cytochrome c oxidase subunit 2 family. As to quaternary structure, component of the cytochrome c oxidase (complex IV, CIV), a multisubunit enzyme composed of a catalytic core of 3 subunits and several supernumerary subunits. The complex exists as a monomer or a dimer and forms supercomplexes (SCs) in the inner mitochondrial membrane with ubiquinol-cytochrome c oxidoreductase (cytochrome b-c1 complex, complex III, CIII). It depends on Cu cation as a cofactor.

The protein localises to the mitochondrion inner membrane. It catalyses the reaction 4 Fe(II)-[cytochrome c] + O2 + 8 H(+)(in) = 4 Fe(III)-[cytochrome c] + 2 H2O + 4 H(+)(out). In terms of biological role, component of the cytochrome c oxidase, the last enzyme in the mitochondrial electron transport chain which drives oxidative phosphorylation. The respiratory chain contains 3 multisubunit complexes succinate dehydrogenase (complex II, CII), ubiquinol-cytochrome c oxidoreductase (cytochrome b-c1 complex, complex III, CIII) and cytochrome c oxidase (complex IV, CIV), that cooperate to transfer electrons derived from NADH and succinate to molecular oxygen, creating an electrochemical gradient over the inner membrane that drives transmembrane transport and the ATP synthase. Cytochrome c oxidase is the component of the respiratory chain that catalyzes the reduction of oxygen to water. Electrons originating from reduced cytochrome c in the intermembrane space (IMS) are transferred via the dinuclear copper A center (CU(A)) of subunit 2 and heme A of subunit 1 to the active site in subunit 1, a binuclear center (BNC) formed by heme A3 and copper B (CU(B)). The BNC reduces molecular oxygen to 2 water molecules using 4 electrons from cytochrome c in the IMS and 4 protons from the mitochondrial matrix. The polypeptide is Cytochrome c oxidase subunit 2 (COII) (Pisaster ochraceus (Ochre sea star)).